The primary structure comprises 318 residues: Transaldolase (318 aa).

Lysine 132 serves as the catalytic Schiff-base intermediate with substrate.

It belongs to the transaldolase family. Type 1 subfamily. Homodimer.

The protein localises to the cytoplasm. The catalysed reaction is D-sedoheptulose 7-phosphate + D-glyceraldehyde 3-phosphate = D-erythrose 4-phosphate + beta-D-fructose 6-phosphate. It participates in carbohydrate degradation; pentose phosphate pathway; D-glyceraldehyde 3-phosphate and beta-D-fructose 6-phosphate from D-ribose 5-phosphate and D-xylulose 5-phosphate (non-oxidative stage): step 2/3. Transaldolase is important for the balance of metabolites in the pentose-phosphate pathway. The polypeptide is Transaldolase (Shewanella baltica (strain OS155 / ATCC BAA-1091)).